We begin with the raw amino-acid sequence, 195 residues long: Peptidyl-tRNA hydrolase (195 aa).

Position 17 (Tyr17) interacts with tRNA. His22 functions as the Proton acceptor in the catalytic mechanism. TRNA is bound by residues Phe68, Asn70, and Asn116.

It belongs to the PTH family. Monomer.

The protein resides in the cytoplasm. It carries out the reaction an N-acyl-L-alpha-aminoacyl-tRNA + H2O = an N-acyl-L-amino acid + a tRNA + H(+). Its function is as follows. Hydrolyzes ribosome-free peptidyl-tRNAs (with 1 or more amino acids incorporated), which drop off the ribosome during protein synthesis, or as a result of ribosome stalling. Functionally, catalyzes the release of premature peptidyl moieties from peptidyl-tRNA molecules trapped in stalled 50S ribosomal subunits, and thus maintains levels of free tRNAs and 50S ribosomes. In Erwinia tasmaniensis (strain DSM 17950 / CFBP 7177 / CIP 109463 / NCPPB 4357 / Et1/99), this protein is Peptidyl-tRNA hydrolase.